Here is a 147-residue protein sequence, read N- to C-terminus: NADH-quinone oxidoreductase subunit A (147 aa).

3 helical membrane-spanning segments follow: residues 16–36 (FAIFLIVAIGLCCLMLVGGWF), 68–88 (FYLVAMFFVIFDVEALYLFAW), and 98–118 (VGFVEAAIFIFVLLAGLVYLV).

It belongs to the complex I subunit 3 family. In terms of assembly, NDH-1 is composed of 13 different subunits. Subunits NuoA, H, J, K, L, M, N constitute the membrane sector of the complex.

It is found in the cell inner membrane. It catalyses the reaction a quinone + NADH + 5 H(+)(in) = a quinol + NAD(+) + 4 H(+)(out). Functionally, NDH-1 shuttles electrons from NADH, via FMN and iron-sulfur (Fe-S) centers, to quinones in the respiratory chain. The immediate electron acceptor for the enzyme in this species is believed to be ubiquinone. Couples the redox reaction to proton translocation (for every two electrons transferred, four hydrogen ions are translocated across the cytoplasmic membrane), and thus conserves the redox energy in a proton gradient. This is NADH-quinone oxidoreductase subunit A from Shigella boydii serotype 18 (strain CDC 3083-94 / BS512).